The chain runs to 1047 residues: MTDNIPLQPVRQKKRMDSRPRAGCCEWLRCCGGGEARPRTVWLGHPEKRDQRYPRNVINNQKYNFFTFLPGVLFNQFKYFFNLYFLLLACSQFVPEMRLGALYTYWVPLGFVLAVTVIREAVEEIRCYVRDKEVNSQVYSRLTARGTVKVKSSNIQVGDLIIVEKNQRVPADMIFLRTSEKNGSCFLRTDQLDGETDWKLRLPVACTQRLPTAADLLQIRSYVYAEEPNIDIHNFVGTFTREDSDPPISESLSIENTLWAGTVVASGTVVGVVLYTGRELRSVMNTSNPRSKIGLFDLEVNCLTKILFGALVVVSLVMVALQHFAGRWYLQIIRFLLLFSNIIPISLRVNLDMGKIVYSWVIRRDSKIPGTVVRSSTIPEQLGRISYLLTDKTGTLTQNEMIFKRLHLGTVAYGLDSMDEVQSHIFSIYTQQSQDPPAQKGPTLTTKVRRTMSSRVHEAVKAIALCHNVTPVYESNGVTDQAEAEKQYEDSCRVYQASSPDEVALVQWTESVGLTLVGRDQSSMQLRTPGDQILNFTILQIFPFTYESKRMGIIVRDESTGEITFYMKGADVVMAGIVQYNDWLEEECGNMAREGLRVLVVAKKSLAEEQYQDFEARYVQAKLSVHDRSLKVATVIESLEMEMELLCLTGVEDQLQADVRPTLETLRNAGIKVWMLTGDKLETATCTAKNAHLVTRNQDIHVFRLVTNRGEAHLELNAFRRKHDCALVISGDSLEVCLKYYEYEFMELACQCPAVVCCRCAPTQKAQIVRLLQERTGKLTCAVGDGGNDVSMIQESDCGVGVEGKEGKQASLAADFSITQFKHLGRLLMVHGRNSYKRSAALSQFVIHRSLCISTMQAVFSSVFYFASVPLYQGFLIIGYSTIYTMFPVFSLVLDKDVKSEVAMLYPELYKDLLKGRPLSYKTFLIWVLISIYQGSTIMYGALLLFESEFVHIVAISFTSLILTELLMVALTIQTWHWLMTVAELLSLACYIASLVFLHEFIDVYFIATLSFLWKVSVITLVSCLPLYVLKYLRRRFSPPSYSKLTS.

At Thr-2 the chain carries N-acetylthreonine. The Cytoplasmic segment spans residues 2-69 (TDNIPLQPVR…NQKYNFFTFL (68 aa)). Residues 70-91 (PGVLFNQFKYFFNLYFLLLACS) form a helical membrane-spanning segment. The Extracellular segment spans residues 92–96 (QFVPE). A helical membrane pass occupies residues 97–119 (MRLGALYTYWVPLGFVLAVTVIR). Topologically, residues 120–303 (EAVEEIRCYV…GLFDLEVNCL (184 aa)) are cytoplasmic. A helical membrane pass occupies residues 304 to 325 (TKILFGALVVVSLVMVALQHFA). Over 326 to 332 (GRWYLQI) the chain is Extracellular. A helical transmembrane segment spans residues 333-354 (IRFLLLFSNIIPISLRVNLDMG). At 355–841 (KIVYSWVIRR…GRNSYKRSAA (487 aa)) the chain is on the cytoplasmic side. Asp-391 functions as the 4-aspartylphosphate intermediate in the catalytic mechanism. Residues Asp-391, Lys-392, Thr-393, Glu-502, Phe-544, Lys-549, Lys-568, Arg-597, Thr-677, Gly-678, Asp-679, Arg-759, and Lys-765 each coordinate ATP. Residue Asp-391 participates in Mg(2+) binding. Residue Thr-393 participates in Mg(2+) binding. Residue Asp-785 coordinates Mg(2+). ATP-binding residues include Asn-788 and Asp-789. Asp-789 is a Mg(2+) binding site. Residues 842–862 (LSQFVIHRSLCISTMQAVFSS) form a helical membrane-spanning segment. Over 863–874 (VFYFASVPLYQG) the chain is Extracellular. A helical membrane pass occupies residues 875–893 (FLIIGYSTIYTMFPVFSLV). The Cytoplasmic segment spans residues 894 to 923 (LDKDVKSEVAMLYPELYKDLLKGRPLSYKT). A helical transmembrane segment spans residues 924–942 (FLIWVLISIYQGSTIMYGA). Residues 943-949 (LLLFESE) are Extracellular-facing. A helical membrane pass occupies residues 950–972 (FVHIVAISFTSLILTELLMVALT). Topologically, residues 973–978 (IQTWHW) are cytoplasmic. The helical transmembrane segment at 979 to 999 (LMTVAELLSLACYIASLVFLH) threads the bilayer. Residues 1000-1006 (EFIDVYF) are Extracellular-facing. A helical membrane pass occupies residues 1007–1030 (IATLSFLWKVSVITLVSCLPLYVL). Over 1031-1047 (KYLRRRFSPPSYSKLTS) the chain is Cytoplasmic.

This sequence belongs to the cation transport ATPase (P-type) (TC 3.A.3) family. Type IV subfamily. As to quaternary structure, heterotrimer with MON2 and DOP1B; this complex regulates SNX3-retromer mediated endosomal sorting of WLS. Interacts with RAB5A and RAB11A. Requires Mg(2+) as cofactor.

The protein localises to the early endosome membrane. Its subcellular location is the recycling endosome membrane. It localises to the late endosome membrane. The protein resides in the golgi apparatus. It is found in the trans-Golgi network membrane. The protein localises to the cell membrane. The catalysed reaction is ATP + H2O + phospholipidSide 1 = ADP + phosphate + phospholipidSide 2.. In terms of biological role, plays a role in regulating membrane trafficking of cargo proteins, namely endosome to plasma membrane recycling, probably acting through RAB5 and RAB11 activation. Also involved in endosome to trans-Golgi network retrograde transport. In complex with MON2 and DOP1B, regulates SNX3 retromer-mediated endosomal sorting of WLS, a transporter of Wnt morphogens in developing tissues. Participates in the formation of endosomal carriers that direct WLS trafficking back to Golgi, away from lysosomal degradation. Appears to be implicated in intercellular communication by negatively regulating the release of exosomes. The flippase activity towards membrane lipids and its role in membrane asymmetry remains to be proved. Required for the maintenance of neurite morphology and synaptic transmission. The chain is Probable phospholipid-transporting ATPase IIA from Homo sapiens (Human).